We begin with the raw amino-acid sequence, 307 residues long: Mitochondrial glycine transporter (307 aa).

Solcar repeat units follow at residues 8 to 87, 115 to 199, and 221 to 305; these read PRNS…MRSS, LTMY…SKQL, and TSTT…LVKR. The next 6 helical transmembrane spans lie at 14–39, 62–88, 121–146, 174–197, 225–251, and 280–298; these read LIGG…TRIQ, GTLP…RSSL, LLTG…VRYE, GFGA…EKSK, VNTT…KTRM, and GLSM…AWGI.

It belongs to the mitochondrial carrier (TC 2.A.29) family. SLC25A38 subfamily.

Its subcellular location is the mitochondrion inner membrane. The enzyme catalyses glycine(in) = glycine(out). Its function is as follows. Mitochondrial glycine transporter that imports glycine into the mitochondrial matrix. Plays an important role in providing glycine for the first enzymatic step in heme biosynthesis, the condensation of glycine with succinyl-CoA to produce 5-aminolevulinate (ALA) in the mitochondrial matrix. The polypeptide is Mitochondrial glycine transporter (Saccharomyces cerevisiae (strain RM11-1a) (Baker's yeast)).